The primary structure comprises 344 residues: Uroporphyrinogen decarboxylase (344 aa).

Residues 25–29, aspartate 75, tyrosine 152, serine 207, and histidine 323 each bind substrate; that span reads RQAGR.

The protein belongs to the uroporphyrinogen decarboxylase family. Homodimer.

The protein resides in the cytoplasm. The catalysed reaction is uroporphyrinogen III + 4 H(+) = coproporphyrinogen III + 4 CO2. It functions in the pathway porphyrin-containing compound metabolism; protoporphyrin-IX biosynthesis; coproporphyrinogen-III from 5-aminolevulinate: step 4/4. Functionally, catalyzes the decarboxylation of four acetate groups of uroporphyrinogen-III to yield coproporphyrinogen-III. This chain is Uroporphyrinogen decarboxylase, found in Roseobacter denitrificans (strain ATCC 33942 / OCh 114) (Erythrobacter sp. (strain OCh 114)).